The sequence spans 145 residues: Large ribosomal subunit protein uL13 (145 aa).

It belongs to the universal ribosomal protein uL13 family. Part of the 50S ribosomal subunit.

Functionally, this protein is one of the early assembly proteins of the 50S ribosomal subunit, although it is not seen to bind rRNA by itself. It is important during the early stages of 50S assembly. The polypeptide is Large ribosomal subunit protein uL13 (Bacillus pumilus (strain SAFR-032)).